Here is a 119-residue protein sequence, read N- to C-terminus: Ribonuclease P protein component (119 aa).

It belongs to the RnpA family. Consists of a catalytic RNA component (M1 or rnpB) and a protein subunit.

The catalysed reaction is Endonucleolytic cleavage of RNA, removing 5'-extranucleotides from tRNA precursor.. In terms of biological role, RNaseP catalyzes the removal of the 5'-leader sequence from pre-tRNA to produce the mature 5'-terminus. It can also cleave other RNA substrates such as 4.5S RNA. The protein component plays an auxiliary but essential role in vivo by binding to the 5'-leader sequence and broadening the substrate specificity of the ribozyme. This Mycobacterium avium (strain 104) protein is Ribonuclease P protein component.